The sequence spans 107 residues: Phosphoribosyl-ATP pyrophosphatase (107 aa).

This sequence belongs to the PRA-PH family.

It localises to the cytoplasm. It carries out the reaction 1-(5-phospho-beta-D-ribosyl)-ATP + H2O = 1-(5-phospho-beta-D-ribosyl)-5'-AMP + diphosphate + H(+). It participates in amino-acid biosynthesis; L-histidine biosynthesis; L-histidine from 5-phospho-alpha-D-ribose 1-diphosphate: step 2/9. This Neisseria gonorrhoeae (strain ATCC 700825 / FA 1090) protein is Phosphoribosyl-ATP pyrophosphatase.